The following is a 1198-amino-acid chain: Structural polyprotein (1198 aa).

The tract at residues Thr2 to Asn15 is interaction with host EXOC1. The segment at Leu37 to Val72 is hydrophobic; homodimerization of capsid protein C. A propeptide spans Gly106–Ala127 (ER anchor for the capsid protein C, removed in mature form by serine protease NS3). The helical transmembrane segment at Gly110 to Leu130 threads the bilayer. N-linked (GlcNAc...) asparagine; by host glycosylation is present at Asn142. 2 helical membrane-spanning segments follow: residues Trp254–Ser274 and Val280–Ser294. 6 disulfides stabilise this stretch: Cys297/Cys324, Cys354/Cys410, Cys354/Cys415, Cys368/Cys399, Cys386/Cys410, and Cys386/Cys415. Positions Asp392–Gly405 are fusion peptide. N-linked (GlcNAc...) asparagine; by host glycosylation occurs at Asn448. Cystine bridges form between Cys484-Cys581 and Cys598-Cys629. Helical transmembrane passes span Phe747–Val767 and Ile774–Ala794. 6 disulfides stabilise this stretch: Cys798/Cys809, Cys849/Cys937, Cys973/Cys1017, Cys1074/Cys1123, Cys1085/Cys1106, and Cys1107/Cys1110. 2 N-linked (GlcNAc...) asparagine; by host glycosylation sites follow: Asn924 and Asn1001. The disordered stretch occupies residues Met1151–Gln1177.

In terms of assembly, homodimer. Interacts (via N-terminus) with host EXOC1 (via C-terminus); this interaction results in EXOC1 degradation through the proteasome degradation pathway. Interacts with host CAPRIN1; this interaction is involved in the suppression of the integrated stress response. As to quaternary structure, forms heterodimers with envelope protein E in the endoplasmic reticulum and Golgi. Homodimer; in the endoplasmic reticulum and Golgi. Interacts with protein prM. Interacts with non-structural protein 1. In terms of processing, genome polyprotein: Specific enzymatic cleavages in vivo yield mature proteins. Cleavages in the lumen of endoplasmic reticulum are performed by host signal peptidase, whereas cleavages in the cytoplasmic side are performed by serine protease NS3. Signal cleavage at the 2K-4B site requires a prior NS3 protease-mediated cleavage at the 4A-2K site. Post-translationally, cleaved in post-Golgi vesicles by a host furin, releasing the mature small envelope protein M, and peptide pr. This cleavage is incomplete as up to 30% of viral particles still carry uncleaved prM. N-glycosylated.

It localises to the secreted. The protein resides in the virion membrane. Its subcellular location is the host endoplasmic reticulum membrane. Functionally, plays a role in virus budding by binding to the cell membrane and gathering the viral RNA into a nucleocapsid that forms the core of a mature virus particle. During virus entry, may induce genome penetration into the host cytoplasm after hemifusion induced by the surface proteins. Can migrate to the cell nucleus where it modulates host functions. Overcomes the anti-viral effects of host EXOC1 by sequestering and degrading the latter through the proteasome degradation pathway. Inhibits the integrated stress response (ISR) in the infected cell by binding to host CAPRIN1. Its function is as follows. Inhibits RNA silencing by interfering with host Dicer. Prevents premature fusion activity of envelope proteins in trans-Golgi by binding to envelope protein E at pH6.0. After virion release in extracellular space, gets dissociated from E dimers. In terms of biological role, acts as a chaperone for envelope protein E during intracellular virion assembly by masking and inactivating envelope protein E fusion peptide. prM is the only viral peptide matured by host furin in the trans-Golgi network probably to avoid catastrophic activation of the viral fusion activity in acidic Golgi compartment prior to virion release. prM-E cleavage is inefficient, and many virions are only partially matured. These uncleaved prM would play a role in immune evasion. Functionally, may play a role in virus budding. Exerts cytotoxic effects by activating a mitochondrial apoptotic pathway through M ectodomain. May display a viroporin activity. Its function is as follows. Binds to host cell surface receptor and mediates fusion between viral and cellular membranes. Envelope protein is synthesized in the endoplasmic reticulum in the form of heterodimer with protein prM. They play a role in virion budding in the ER, and the newly formed immature particle is covered with 60 spikes composed of heterodimer between precursor prM and envelope protein E. The virion is transported to the Golgi apparatus where the low pH causes dissociation of PrM-E heterodimers and formation of E homodimers. prM-E cleavage is inefficient, and many virions are only partially matured. These uncleaved prM would play a role in immune evasion. May play a role in neuroinvasiveness. The chain is Structural polyprotein from Ardeidae (herons).